The primary structure comprises 234 residues: Uridylate kinase (234 aa).

Residue 10 to 11 (GS) coordinates ATP. UMP is bound at residue Gly44. The ATP site is built by Gly45 and Arg49. UMP-binding positions include Asp66 and 114–120 (ITPGQTT). Positions 140, 146, and 149 each coordinate ATP.

Belongs to the UMP kinase family. In terms of assembly, homohexamer.

It is found in the cytoplasm. The catalysed reaction is UMP + ATP = UDP + ADP. Its pathway is pyrimidine metabolism; CTP biosynthesis via de novo pathway; UDP from UMP (UMPK route): step 1/1. Inhibited by UTP. Catalyzes the reversible phosphorylation of UMP to UDP. This Methanoregula boonei (strain DSM 21154 / JCM 14090 / 6A8) protein is Uridylate kinase.